Reading from the N-terminus, the 206-residue chain is Large ribosomal subunit protein uL4 (206 aa).

Residues 43-94 (ARSGNRAQKDREQVKHTTKKPWRQKGTGRARAGMSSSPLWRGGGRIFPNSPE) are disordered. The span at 58–70 (HTTKKPWRQKGTG) shows a compositional bias: basic residues.

Belongs to the universal ribosomal protein uL4 family. Part of the 50S ribosomal subunit.

In terms of biological role, one of the primary rRNA binding proteins, this protein initially binds near the 5'-end of the 23S rRNA. It is important during the early stages of 50S assembly. It makes multiple contacts with different domains of the 23S rRNA in the assembled 50S subunit and ribosome. Functionally, forms part of the polypeptide exit tunnel. The chain is Large ribosomal subunit protein uL4 from Polynucleobacter asymbioticus (strain DSM 18221 / CIP 109841 / QLW-P1DMWA-1) (Polynucleobacter necessarius subsp. asymbioticus).